Here is a 295-residue protein sequence, read N- to C-terminus: tRNA-cytidine(32) 2-sulfurtransferase (295 aa).

Residues Ser-63–Ser-68 carry the PP-loop motif motif. [4Fe-4S] cluster contacts are provided by Cys-138, Cys-141, and Cys-229.

This sequence belongs to the TtcA family. As to quaternary structure, homodimer. Mg(2+) serves as cofactor. Requires [4Fe-4S] cluster as cofactor.

The protein localises to the cytoplasm. It catalyses the reaction cytidine(32) in tRNA + S-sulfanyl-L-cysteinyl-[cysteine desulfurase] + AH2 + ATP = 2-thiocytidine(32) in tRNA + L-cysteinyl-[cysteine desulfurase] + A + AMP + diphosphate + H(+). It functions in the pathway tRNA modification. In terms of biological role, catalyzes the ATP-dependent 2-thiolation of cytidine in position 32 of tRNA, to form 2-thiocytidine (s(2)C32). The sulfur atoms are provided by the cysteine/cysteine desulfurase (IscS) system. The chain is tRNA-cytidine(32) 2-sulfurtransferase from Hyphomonas neptunium (strain ATCC 15444).